The chain runs to 77 residues: Defensin-like protein (77 aa).

A signal peptide spans 1–30; it reads MERGMRLFSSLVLVLLLVTATEMGPKVAEA. 4 cysteine pairs are disulfide-bonded: Cys33–Cys77, Cys44–Cys64, Cys50–Cys71, and Cys54–Cys73.

The protein belongs to the DEFL family.

The protein localises to the secreted. The sequence is that of Defensin-like protein from Nelumbo nucifera (Sacred lotus).